A 184-amino-acid chain; its full sequence is Large ribosomal subunit protein uL5 (184 aa).

It belongs to the universal ribosomal protein uL5 family. In terms of assembly, part of the 50S ribosomal subunit; part of the 5S rRNA/L5/L18/L25 subcomplex. Contacts the 5S rRNA and the P site tRNA. Forms a bridge to the 30S subunit in the 70S ribosome.

In terms of biological role, this is one of the proteins that bind and probably mediate the attachment of the 5S RNA into the large ribosomal subunit, where it forms part of the central protuberance. In the 70S ribosome it contacts protein S13 of the 30S subunit (bridge B1b), connecting the 2 subunits; this bridge is implicated in subunit movement. Contacts the P site tRNA; the 5S rRNA and some of its associated proteins might help stabilize positioning of ribosome-bound tRNAs. The polypeptide is Large ribosomal subunit protein uL5 (Wolinella succinogenes (strain ATCC 29543 / DSM 1740 / CCUG 13145 / JCM 31913 / LMG 7466 / NCTC 11488 / FDC 602W) (Vibrio succinogenes)).